A 197-amino-acid chain; its full sequence is Cyclin-dependent kinase inhibitor 1B (197 aa).

Over residues 1–11 (MSNVRVSNGSP) the composition is skewed to polar residues. The disordered stretch occupies residues 1 to 34 (MSNVRVSNGSPSLERMDARQAEHPKPSACRNLFG). Ser-10 carries the post-translational modification Phosphoserine; by UHMK1. The span at 14 to 25 (ERMDARQAEHPK) shows a compositional bias: basic and acidic residues. Residues 51–91 (DMEEASQRKWNFDFQNHKPLEGRYEWQEVERGSLPEFYYRP) form an interaction with CDK2 region. Tyr-74 carries the post-translational modification Phosphotyrosine; by SRC. Positions 86-197 (EFYYRPPRPP…PKKPGLRRQT (112 aa)) are disordered. The residue at position 88 (Tyr-88) is a Phosphotyrosine; by ABL, LYN, SRC and JAK2. Residue Tyr-89 is modified to Phosphotyrosine. Over residues 104-113 (QESQDVSGSR) the composition is skewed to polar residues. The Nuclear localization signal motif lies at 153-169 (KRPAAEDSSSQNKRANR). At Thr-170 the chain carries Phosphothreonine; by CaMK1. Polar residues predominate over residues 175–186 (SDGSPNAGTVEQ). Thr-187 bears the Phosphothreonine; by PKB/AKT1, CDK1 and CDK2 mark. Thr-197 is subject to Phosphothreonine; by CaMK1, PKB/AKT1, RPS6KA1, RPS6KA3 and PIM1.

It belongs to the CDI family. In terms of assembly, forms a ternary complex composed of CCNE1, CDK2 and CDKN1B. Interacts directly with CCNE1; the interaction is inhibited by CDK2-dependent phosphorylation on Thr-187. Interacts with COPS5, subunit of the COP9 signalosome complex; the interaction leads to CDKN1B degradation. Interacts with NUP50; the interaction leads to nuclear import and degradation of phosphorylated CDKN1B. Interacts with CCND1 and SNX6. Interacts (Thr-197-phosphorylated form) with 14-3-3 proteins, binds strongly YWHAQ, weakly YWHAE and YWHAH, but not YWHAB nor YWHAZ; the interaction with YWHAQ results in translocation to the cytoplasm. Interacts with AKT1 and LYN; the interactions lead to cytoplasmic mislocation, phosphorylation of CDKN1B and inhibition of cell cycle arrest. Forms a ternary complex with CCNA2 and CDK2; CDKN1B inhibits the kinase activity of CDK2 through conformational rearrangements. Interacts (unphosphorylated form) with CDK2. Forms a complex with CDK2 and SPDYA, but does not directly interact with SPDYA. Forms a ternary complex composed of cyclin D, CDK4 and CDKN1B. Interacts (phosphorylated on Tyr-88 and Tyr-89) with CDK4; the interaction is required for cyclin D and CDK4 complex assembly, induces nuclear translocation and activates the CDK4 kinase activity. Interacts with GRB2. Interacts with PIM1. Identified in a complex with SKP1, SKP2 and CKS1B. Interacts with UHMK1; the interaction leads to cytoplasmic mislocation, phosphorylation of CDKN1B and inhibition of cell cycle arrest. Also interacts with CDK1. Dephosphorylated on Thr-187 by PPM1H, leading to CDKN1B stability. Phosphorylated; phosphorylation occurs on serine, threonine and tyrosine residues. Phosphorylation on Ser-10 is the major site of phosphorylation in resting cells, takes place at the G(0)-G(1) phase and leads to protein stability. Phosphorylation on other sites is greatly enhanced by mitogens, growth factors, MYC and in certain cancer cell lines. The phosphorylated form found in the cytoplasm is inactivate. Phosphorylation on Thr-197 is required for interaction with 14-3-3 proteins. Phosphorylation on Thr-187, by CDK1 and CDK2 leads to protein ubiquitination and proteasomal degradation. Tyrosine phosphorylation promotes this process. Phosphorylation by PKB/AKT1 can be suppressed by LY294002, an inhibitor of the catalytic subunit of PI3K. Phosphorylation on Tyr-88 and Tyr-89 has no effect on binding CDK2, but is required for binding CDK4. Dephosphorylated on tyrosine residues by G-CSF. Dephosphorylated on Thr-187 by PPM1H, leading to CDKN1B stability. Post-translationally, ubiquitinated; in the cytoplasm by the KPC complex (composed of RNF123/KPC1 and UBAC1/KPC2) and, in the nucleus, by SCF(SKP2). The latter requires prior phosphorylation on Thr-187. Ubiquitinated; by a TRIM21-containing SCF(SKP2)-like complex; leads to its degradation. In terms of processing, subject to degradation in the lysosome. Interaction with SNX6 promotes lysosomal degradation.

It localises to the nucleus. It is found in the cytoplasm. Its subcellular location is the endosome. Its function is as follows. Important regulator of cell cycle progression. Inhibits the kinase activity of CDK2 bound to cyclin A, but has little inhibitory activity on CDK2 bound to SPDYA. Involved in G1 arrest. Potent inhibitor of cyclin E- and cyclin A-CDK2 complexes. Forms a complex with cyclin type D-CDK4 complexes and is involved in the assembly, stability, and modulation of CCND1-CDK4 complex activation. Acts either as an inhibitor or an activator of cyclin type D-CDK4 complexes depending on its phosphorylation state and/or stoichometry. In Mus musculus (Mouse), this protein is Cyclin-dependent kinase inhibitor 1B (Cdkn1b).